Consider the following 391-residue polypeptide: Serine protease 7 (391 aa).

An N-terminal signal peptide occupies residues 1 to 27 (MKSTRKVVGIFLATCLLPFTVLQNVAA). The propeptide at 28–136 (QGSCRNPNQK…KCGPHSFSNK (109 aa)) is activation peptide. Residues 30 to 84 (SCRNPNQKQGQCLSIYDCQSLLSVIQQSYVSPEDRTFLRNSQCLDGVGRQPYVCC) form the Clip domain. 3 disulfide bridges follow: cysteine 31/cysteine 83, cysteine 41/cysteine 72, and cysteine 47/cysteine 84. A disordered region spans residues 91–121 (GSQEATSAAPPPTTTSSSSRGQDGQAGLGNL). Intrachain disulfides connect cysteine 128/cysteine 264, cysteine 167/cysteine 183, cysteine 211/cysteine 216, cysteine 310/cysteine 327, and cysteine 337/cysteine 366. Residues 137–390 (VYNGNDTAID…YMDWIVETIR (254 aa)) form the Peptidase S1 domain. The N-linked (GlcNAc...) asparagine glycan is linked to asparagine 141. Catalysis depends on histidine 182, which acts as the Charge relay system. Ca(2+) contacts are provided by glutamate 202, aspartate 204, lysine 207, and aspartate 210. Aspartate 244 acts as the Charge relay system in catalysis. The Charge relay system role is filled by serine 341.

The protein belongs to the peptidase S1 family. CLIP subfamily. As to quaternary structure, interacts with Spn27A.

It is found in the secreted. Functionally, serine protease that, by cleaving and activating prophenoloxidase (PPO1) after immune challenge, plays an essential role in the melanization immune response to septic wounding. May function in diverse Hayan-dependent PPO1-activating cascades that are negatively controlled by different serpin proteins; Spn27A in the hemolymph and Spn77BA in the trachea. Important for the innate immune response to fungi. Regulation of melanization and PPO1 activation appears to be largely independent of the Toll signaling pathway. This is Serine protease 7 from Drosophila melanogaster (Fruit fly).